A 279-amino-acid chain; its full sequence is 2'-N-acetylparomamine deacetylase (279 aa).

Residues His31, Asp34, and His157 each coordinate Zn(2+). The disordered stretch occupies residues 245 to 279; it reads PRRWTGGTAGAGHAAGRRGAPHTERVWTPAPAGAR. Residues 246-258 are compositionally biased toward low complexity; the sequence is RRWTGGTAGAGHA.

Belongs to the PIGL family. Requires Zn(2+) as cofactor.

The enzyme catalyses 2'-N-acetylparomamine + H2O = paromamine + acetate. It catalyses the reaction 2'''-acetyl-6'''-hydroxyneomycin C + H2O = 6'''-deamino-6'''-hydroxyneomycin C + acetate. It participates in antibiotic biosynthesis; neomycin biosynthesis. Its function is as follows. Deacetylase involved in the biosynthesis of neomycin by mediating 2 steps of the pathway. Deacetylates both 2'-N-acetylparomamine and 2'''-acetyl-6'''-hydroxyneomycin C. This chain is 2'-N-acetylparomamine deacetylase (neoL), found in Streptomyces fradiae (Streptomyces roseoflavus).